A 71-amino-acid polypeptide reads, in one-letter code: DNA-directed RNA polymerase subunit omega (71 aa).

Belongs to the RNA polymerase subunit omega family. The RNAP catalytic core consists of 2 alpha, 1 beta/beta' and 1 omega subunit. When a sigma factor is associated with the core the holoenzyme is formed, which can initiate transcription.

It carries out the reaction RNA(n) + a ribonucleoside 5'-triphosphate = RNA(n+1) + diphosphate. Its function is as follows. Promotes RNA polymerase assembly. Latches the N- and C-terminal regions of the beta' subunit thereby facilitating its interaction with the beta and alpha subunits. The sequence is that of DNA-directed RNA polymerase subunit omega from Wolinella succinogenes (strain ATCC 29543 / DSM 1740 / CCUG 13145 / JCM 31913 / LMG 7466 / NCTC 11488 / FDC 602W) (Vibrio succinogenes).